A 222-amino-acid chain; its full sequence is ATP synthase F(0) complex subunit a (222 aa).

Helical transmembrane passes span 7-27, 64-84, 93-113, 132-152, 160-180, and 197-219; these read AFFD…AILL, WSLM…LGLL, QLTV…VLGF, FLIP…PITL, ITAG…LLSV, and ILEL…LYLH.

The protein belongs to the ATPase A chain family. As to quaternary structure, component of the ATP synthase complex composed at least of ATP5F1A/subunit alpha, ATP5F1B/subunit beta, ATP5MC1/subunit c (homooctomer), MT-ATP6/subunit a, MT-ATP8/subunit 8, ATP5ME/subunit e, ATP5MF/subunit f, ATP5MG/subunit g, ATP5MK/subunit k, ATP5MJ/subunit j, ATP5F1C/subunit gamma, ATP5F1D/subunit delta, ATP5F1E/subunit epsilon, ATP5PF/subunit F6, ATP5PB/subunit b, ATP5PD/subunit d, ATP5PO/subunit OSCP. ATP synthase complex consists of a soluble F(1) head domain (subunits alpha(3) and beta(3)) - the catalytic core - and a membrane F(0) domain - the membrane proton channel (subunits c, a, 8, e, f, g, k and j). These two domains are linked by a central stalk (subunits gamma, delta, and epsilon) rotating inside the F1 region and a stationary peripheral stalk (subunits F6, b, d, and OSCP). Interacts with DNAJC30; interaction is direct.

The protein resides in the mitochondrion inner membrane. The enzyme catalyses H(+)(in) = H(+)(out). In terms of biological role, subunit a, of the mitochondrial membrane ATP synthase complex (F(1)F(0) ATP synthase or Complex V) that produces ATP from ADP in the presence of a proton gradient across the membrane which is generated by electron transport complexes of the respiratory chain. ATP synthase complex consist of a soluble F(1) head domain - the catalytic core - and a membrane F(1) domain - the membrane proton channel. These two domains are linked by a central stalk rotating inside the F(1) region and a stationary peripheral stalk. During catalysis, ATP synthesis in the catalytic domain of F(1) is coupled via a rotary mechanism of the central stalk subunits to proton translocation. With the subunit c (ATP5MC1), forms the proton-conducting channel in the F(0) domain, that contains two crucial half-channels (inlet and outlet) that facilitate proton movement from the mitochondrial intermembrane space (IMS) into the matrix. Protons are taken up via the inlet half-channel and released through the outlet half-channel, following a Grotthuss mechanism. This Elephas maximus (Indian elephant) protein is ATP synthase F(0) complex subunit a.